Reading from the N-terminus, the 890-residue chain is Serine/threonine-protein kinase greatwall (890 aa).

A Protein kinase domain is found at 33 to 846; that stretch reads FSIVKPISRG…LKDLKAHHLF (814 aa). Residues 39–47 and K62 each bind ATP; that span reads ISRGAFGKV. D156 acts as the Proton acceptor in catalysis. Disordered regions lie at residues 324 to 353, 412 to 434, 517 to 541, 559 to 592, and 609 to 628; these read AEAPPYLNSSRVKDCSSEQARSKKPMGSSA, HKDLGKDDQGELEKLTISPDSPP, NYASDRKSEDDYISAPRTHENLGSG, DGEANSNSGCEEGENQKESLNQDSESSSADMSVT, and ELSFEESPSESNEETTPENK. Positions 412–425 are enriched in basic and acidic residues; the sequence is HKDLGKDDQGELEK. A compositionally biased stretch (polar residues) spans 576-592; it reads ESLNQDSESSSADMSVT. The segment covering 615–624 has biased composition (acidic residues); it reads SPSESNEETT. The residue at position 752 (T752) is a Phosphothreonine; by CDK1. The AGC-kinase C-terminal domain maps to 847–890; the sequence is HAIEWDDLQNLPMPFIPQPDDETDTTYFEARNNAQHLKVSGFSL.

The protein belongs to the protein kinase superfamily. AGC Ser/Thr protein kinase family. Post-translationally, phosphorylation at Thr-752 by CDK1 during M phase activates its kinase activity. Maximum phosphorylation occurs in prometaphase.

The protein localises to the cytoplasm. The protein resides in the cytoskeleton. It is found in the microtubule organizing center. Its subcellular location is the centrosome. It localises to the nucleus. The catalysed reaction is L-seryl-[protein] + ATP = O-phospho-L-seryl-[protein] + ADP + H(+). It catalyses the reaction L-threonyl-[protein] + ATP = O-phospho-L-threonyl-[protein] + ADP + H(+). Serine/threonine kinase that plays a key role in M phase by acting as a regulator of mitosis entry and maintenance. Acts by promoting the inactivation of protein phosphatase 2A (PP2A) during M phase: does not directly inhibit PP2A but acts by mediating phosphorylation and subsequent activation of arpp19 and ensa at 'Ser-67', 2 phosphatase inhibitors that specifically inhibit the ppp2r2d (PR55-delta) subunit of PP2A. Inactivation of PP2A during M phase is essential to keep cyclin-B1-CDK1 activity high. Following DNA damage, it is also involved in checkpoint recovery by being inhibited. The polypeptide is Serine/threonine-protein kinase greatwall (mastl) (Xenopus tropicalis (Western clawed frog)).